The sequence spans 64 residues: Large ribosomal subunit protein bL35 (64 aa).

Composition is skewed to basic residues over residues 1 to 15 (MPKA…KRFR) and 23 to 33 (VRQKANRRHLL). Positions 1 to 47 (MPKAKTHSGASKRFRTTGSGKIVRQKANRRHLLEHKPTSRTRRLDGR) are disordered. Over residues 34-46 (EHKPTSRTRRLDG) the composition is skewed to basic and acidic residues.

Belongs to the bacterial ribosomal protein bL35 family.

The chain is Large ribosomal subunit protein bL35 from Mycobacteroides abscessus (strain ATCC 19977 / DSM 44196 / CCUG 20993 / CIP 104536 / JCM 13569 / NCTC 13031 / TMC 1543 / L948) (Mycobacterium abscessus).